A 517-amino-acid chain; its full sequence is MSAYRRPVALIVLDGWGLNPDPRANAVAMARHPNFDRLMARYPHTTLTASGEAVGLLPGQMGDSNVGHLNLGAGRIVYQTLVRIWRSIQDGSFYTLPVWRPVLDRAKQPGKALHLMGLVSDGGVHSHIDHLLALIDLAKRENVERVYVHAFLDGRDVPPQSALPYLERVEAKLKETGIGAIATISGRYYAMDRDKRWDRTEKAFLAITQGIGHTAGSVAEAVERAYARGETDEFVQPTVIEGVDGRVREGDGVIFFNFRPDRARQLVRALHETAFDGFKRPEGYRPVELVTMTQYDQTFTDIPVAFGPQFVDVPMGQVVAEAGLRQLRIAETEKYAHVTYFFNGGEERVFPGEERVLVPSPKVATYDLKPEMSAYEVAREAVKWIEEDRTDFIVLNFANPDMVGHTGVLEAAIRAVEAVDECLGQVVDALLAKGGAAVIIADHGNCDQMVDYETGAPHTNHTLNPVPCILVDDQRLDAKLKPGVLANVAPTLLEIIGLPKPPQMDADSLLVSNAEGA.

Mn(2+)-binding residues include Asp-14 and Ser-64. Catalysis depends on Ser-64, which acts as the Phosphoserine intermediate. Residues His-125, 155 to 156, Arg-187, Arg-193, 259 to 262, and Lys-334 each bind substrate; these read RD and RPDR. Mn(2+) contacts are provided by Asp-401, His-405, Asp-442, His-443, and His-461.

The protein belongs to the BPG-independent phosphoglycerate mutase family. Monomer. It depends on Mn(2+) as a cofactor.

The enzyme catalyses (2R)-2-phosphoglycerate = (2R)-3-phosphoglycerate. The protein operates within carbohydrate degradation; glycolysis; pyruvate from D-glyceraldehyde 3-phosphate: step 3/5. Catalyzes the interconversion of 2-phosphoglycerate and 3-phosphoglycerate. The protein is 2,3-bisphosphoglycerate-independent phosphoglycerate mutase of Symbiobacterium thermophilum (strain DSM 24528 / JCM 14929 / IAM 14863 / T).